The following is a 112-amino-acid chain: Nucleoid-associated protein FTF0810c (112 aa).

A disordered region spans residues 1–27 (MNFDMSKLMQQAQKMQEQMKKAQQERE). Residues 17 to 27 (EQMKKAQQERE) show a composition bias toward basic and acidic residues.

It belongs to the YbaB/EbfC family. As to quaternary structure, homodimer.

It localises to the cytoplasm. It is found in the nucleoid. Binds to DNA and alters its conformation. May be involved in regulation of gene expression, nucleoid organization and DNA protection. In Francisella tularensis subsp. tularensis (strain FSC 198), this protein is Nucleoid-associated protein FTF0810c.